Reading from the N-terminus, the 351-residue chain is Soluble interferon alpha/beta receptor OPG204 (351 aa).

The signal sequence occupies residues 1-19 (MTMKMMVHIYFVSLLLLLF). Ig-like C2-type domains follow at residues 65-147 (LGEP…RSHI) and 155-237 (PKTY…IVVS). Intrachain disulfides connect C73/C129 and C172/C221. Residues N117, N182, N261, N269, and N321 are each glycosylated (N-linked (GlcNAc...) asparagine; by host). An Ig-like V-type domain is found at 246 to 345 (PSQDHRFKLI…HNYYFEKTLT (100 aa)). A disulfide bridge connects residues C272 and C333.

It belongs to the interleukin-1 receptor family. Interacts with host IFNA1.

Its subcellular location is the secreted. Its function is as follows. Counteracts the antiviral effects of host IFN-alpha/beta and key IFN-inducible proteins involved in viral RNA degradation suxh as host OAS1. Acts as a soluble IFN-alpha receptor and thus inhibits the interaction between host IFN-alpha and its receptor. This Vaccinia virus (strain Western Reserve) (VACV) protein is Soluble interferon alpha/beta receptor OPG204 (OPG204).